Reading from the N-terminus, the 231-residue chain is Aldehyde decarbonylase (231 aa).

Fe cation contacts are provided by Glu32, Glu60, His63, Glu115, and His147.

The protein belongs to the aldehyde decarbonylase family. The cofactor is Binds 2 metal cations per subunit. The catalytic dinuclear metal-binding site could be either a di-iron or a manganese-iron cofactor..

It carries out the reaction a long-chain fatty aldehyde + 2 NADPH + O2 + H(+) = a long-chain alkane + formate + 2 NADP(+) + H2O. Its function is as follows. Catalyzes the decarbonylation of fatty aldehydes to alkanes. Requires the presence of ferredoxin, ferredoxin reductase and NADPH for in vitro decarbonylase activity. Involved in the biosynthesis of alkanes, mainly heptadecane and pentadecane. The sequence is that of Aldehyde decarbonylase from Synechocystis sp. (strain ATCC 27184 / PCC 6803 / Kazusa).